Reading from the N-terminus, the 230-residue chain is MSERAPVVTIDGPSGAGKGTISQLLAKHLGWQLLDSGAIYRVLALAAIHHDVELENEESITLLASHLDVKFLTGNEKDPVQVILEGEDVTTAIRTQECSNAASKVAAFPRVREALLRRQRAFRTAPGLIADGRDMGTVVFPTASAKLYLTASAQERAQRRYNQLQDKGFDVNIERLLAEIIERDDRDMNRPVAPLVPAENALVIDTSDKGIDEVLELALNYINQKLSSTN.

G12–T20 is a binding site for ATP.

It belongs to the cytidylate kinase family. Type 1 subfamily.

Its subcellular location is the cytoplasm. The catalysed reaction is CMP + ATP = CDP + ADP. It catalyses the reaction dCMP + ATP = dCDP + ADP. In Shewanella oneidensis (strain ATCC 700550 / JCM 31522 / CIP 106686 / LMG 19005 / NCIMB 14063 / MR-1), this protein is Cytidylate kinase.